The primary structure comprises 173 residues: MKTKEVVDELTVKRAITRITYEIIERNKDLNKIVLAGIKTRGVFIAHRIQERLKQLENLSVPVVELDTKPFRDDVKSGEDTSLVSVDVTDREVILVDDVLYTGRTIRAAIDNIVGHGRPARVSLAVLVDRGHRELPIRPDYVGKNIPTSRSEEIIVEMTELDDQDRVLITEEA.

Residues 93–105 (VILVDDVLYTGRT) carry the PRPP-binding motif.

The protein belongs to the purine/pyrimidine phosphoribosyltransferase family. PyrR subfamily. Homodimer and homohexamer; in equilibrium.

The enzyme catalyses UMP + diphosphate = 5-phospho-alpha-D-ribose 1-diphosphate + uracil. Regulates transcriptional attenuation of the pyrimidine nucleotide (pyr) operon by binding in a uridine-dependent manner to specific sites on pyr mRNA. This disrupts an antiterminator hairpin in the RNA and favors formation of a downstream transcription terminator, leading to a reduced expression of downstream genes. In terms of biological role, also displays a weak uracil phosphoribosyltransferase activity which is not physiologically significant. This chain is Bifunctional protein PyrR, found in Streptococcus pneumoniae (strain 70585).